A 383-amino-acid polypeptide reads, in one-letter code: Acetyl-CoA acetyltransferase (383 aa).

Cys-85 serves as the catalytic Acyl-thioester intermediate. Positions 206, 207, 209, and 328 each coordinate CoA. The Proton acceptor role is filled by His-332.

The protein belongs to the thiolase-like superfamily. Thiolase family. In terms of assembly, interacts with HMG-CoA synthase (HMGCS) that catalyzes the second step in the pathway and with a DUF35 protein. The acetoacetyl-CoA thiolase/HMG-CoA synthase complex channels the intermediate via a fused CoA-binding site, which allows for efficient coupling of the endergonic thiolase reaction with the exergonic HMGCS reaction.

It catalyses the reaction 2 acetyl-CoA = acetoacetyl-CoA + CoA. It functions in the pathway metabolic intermediate biosynthesis; (R)-mevalonate biosynthesis; (R)-mevalonate from acetyl-CoA: step 1/3. Its function is as follows. Catalyzes the condensation of two acetyl-coA molecules into acetoacetyl-CoA. Functions in the mevalonate (MVA) pathway leading to isopentenyl diphosphate (IPP), a key precursor for the biosynthesis of isoprenoid compounds that are building blocks of archaeal membrane lipids. The protein is Acetyl-CoA acetyltransferase of Methanothermobacter thermautotrophicus (strain ATCC 29096 / DSM 1053 / JCM 10044 / NBRC 100330 / Delta H) (Methanobacterium thermoautotrophicum).